The following is an 88-amino-acid chain: UPF0250 protein IL0958 (88 aa).

The protein belongs to the UPF0250 family.

The sequence is that of UPF0250 protein IL0958 from Idiomarina loihiensis (strain ATCC BAA-735 / DSM 15497 / L2-TR).